A 655-amino-acid chain; its full sequence is Probable potassium transport system protein Kup (655 aa).

12 helical membrane passes run 19-39 (GLLI…LYVM), 42-62 (IAGG…CVFW), 102-122 (VWPA…TPPI), 132-152 (LIFN…VMLF), 161-181 (IVGK…ATLG), 214-234 (SGFW…ALYS), 246-266 (ISWI…GAWI), 282-302 (IMPE…AIIA), 338-358 (LFIP…VLWF), 370-390 (LAIN…LLII), 395-415 (FIWV…FLVA), and 420-440 (FFHG…IMII).

The protein belongs to the HAK/KUP transporter (TC 2.A.72) family.

The protein resides in the cell inner membrane. The enzyme catalyses K(+)(in) + H(+)(in) = K(+)(out) + H(+)(out). Transport of potassium into the cell. Likely operates as a K(+):H(+) symporter. The polypeptide is Probable potassium transport system protein Kup (Cytophaga hutchinsonii (strain ATCC 33406 / DSM 1761 / CIP 103989 / NBRC 15051 / NCIMB 9469 / D465)).